The sequence spans 250 residues: 3-deoxy-manno-octulosonate cytidylyltransferase (250 aa).

This sequence belongs to the KdsB family.

It localises to the cytoplasm. The catalysed reaction is 3-deoxy-alpha-D-manno-oct-2-ulosonate + CTP = CMP-3-deoxy-beta-D-manno-octulosonate + diphosphate. It participates in nucleotide-sugar biosynthesis; CMP-3-deoxy-D-manno-octulosonate biosynthesis; CMP-3-deoxy-D-manno-octulosonate from 3-deoxy-D-manno-octulosonate and CTP: step 1/1. Its pathway is bacterial outer membrane biogenesis; lipopolysaccharide biosynthesis. Its function is as follows. Activates KDO (a required 8-carbon sugar) for incorporation into bacterial lipopolysaccharide in Gram-negative bacteria. The chain is 3-deoxy-manno-octulosonate cytidylyltransferase from Francisella tularensis subsp. holarctica (strain LVS).